The following is a 171-amino-acid chain: ATP synthase subunit b (171 aa).

Residues I4–Q24 form a helical membrane-spanning segment.

The protein belongs to the ATPase B chain family. In terms of assembly, F-type ATPases have 2 components, F(1) - the catalytic core - and F(0) - the membrane proton channel. F(1) has five subunits: alpha(3), beta(3), gamma(1), delta(1), epsilon(1). F(0) has three main subunits: a(1), b(2) and c(10-14). The alpha and beta chains form an alternating ring which encloses part of the gamma chain. F(1) is attached to F(0) by a central stalk formed by the gamma and epsilon chains, while a peripheral stalk is formed by the delta and b chains.

The protein localises to the cell inner membrane. Its function is as follows. F(1)F(0) ATP synthase produces ATP from ADP in the presence of a proton or sodium gradient. F-type ATPases consist of two structural domains, F(1) containing the extramembraneous catalytic core and F(0) containing the membrane proton channel, linked together by a central stalk and a peripheral stalk. During catalysis, ATP synthesis in the catalytic domain of F(1) is coupled via a rotary mechanism of the central stalk subunits to proton translocation. In terms of biological role, component of the F(0) channel, it forms part of the peripheral stalk, linking F(1) to F(0). This chain is ATP synthase subunit b, found in Helicobacter hepaticus (strain ATCC 51449 / 3B1).